An 879-amino-acid polypeptide reads, in one-letter code: Alanine--tRNA ligase (879 aa).

4 residues coordinate Zn(2+): His-566, His-570, Cys-668, and His-672.

This sequence belongs to the class-II aminoacyl-tRNA synthetase family. Zn(2+) serves as cofactor.

The protein localises to the cytoplasm. It carries out the reaction tRNA(Ala) + L-alanine + ATP = L-alanyl-tRNA(Ala) + AMP + diphosphate. Functionally, catalyzes the attachment of alanine to tRNA(Ala) in a two-step reaction: alanine is first activated by ATP to form Ala-AMP and then transferred to the acceptor end of tRNA(Ala). Also edits incorrectly charged Ser-tRNA(Ala) and Gly-tRNA(Ala) via its editing domain. The sequence is that of Alanine--tRNA ligase from Clostridium botulinum (strain Hall / ATCC 3502 / NCTC 13319 / Type A).